A 287-amino-acid polypeptide reads, in one-letter code: ATP synthase gamma chain (287 aa).

Belongs to the ATPase gamma chain family. As to quaternary structure, F-type ATPases have 2 components, CF(1) - the catalytic core - and CF(0) - the membrane proton channel. CF(1) has five subunits: alpha(3), beta(3), gamma(1), delta(1), epsilon(1). CF(0) has three main subunits: a, b and c.

Its subcellular location is the cell inner membrane. In terms of biological role, produces ATP from ADP in the presence of a proton gradient across the membrane. The gamma chain is believed to be important in regulating ATPase activity and the flow of protons through the CF(0) complex. This Pectobacterium carotovorum subsp. carotovorum (strain PC1) protein is ATP synthase gamma chain.